Here is a 392-residue protein sequence, read N- to C-terminus: Galactokinase (392 aa).

Position 33–36 (33–36 (EHTD)) interacts with substrate. Residues Ser67 and 129–135 (GSGLSSS) each bind ATP. Ser135 and Glu167 together coordinate Mg(2+). Asp179 functions as the Proton acceptor in the catalytic mechanism. Tyr229 contributes to the substrate binding site.

Belongs to the GHMP kinase family. GalK subfamily.

It localises to the cytoplasm. The enzyme catalyses alpha-D-galactose + ATP = alpha-D-galactose 1-phosphate + ADP + H(+). It participates in carbohydrate metabolism; galactose metabolism. Catalyzes the transfer of the gamma-phosphate of ATP to D-galactose to form alpha-D-galactose-1-phosphate (Gal-1-P). In Limosilactobacillus reuteri (strain DSM 20016) (Lactobacillus reuteri), this protein is Galactokinase.